We begin with the raw amino-acid sequence, 538 residues long: uncharacterized protein (538 aa).

The signal sequence occupies residues 1–17 (MSFSATILFSPPSGSEA). The segment at 101–131 (RQGKVSIPDEDGESRAHSSPPEEPGPLKESP) is disordered. Residues Lys-128 and Lys-221 each participate in a glycyl lysine isopeptide (Lys-Gly) (interchain with G-Cter in SUMO2) cross-link. Ser-224 carries the post-translational modification Phosphoserine. Residues 233 to 253 (RATPETGPENGTKLPPPRPED) are disordered. Residues Ser-285 and Ser-428 each carry the phosphoserine modification. Positions 488–523 (LPPELYNPNFQEEEDEGGDENAPGSPSFDQPHKTCC) are disordered.

Its subcellular location is the secreted. This is an uncharacterized protein from Homo sapiens (Human).